The following is a 235-amino-acid chain: Ornithine decarboxylase antizyme 3 (235 aa).

Residues Ser9 and Ser12 each carry the phosphoserine modification.

This sequence belongs to the ODC antizyme family. Interacts with ODC1 and thereby sterically blocks ODC homodimerization. Interacts with AZIN2; this interaction disrupts the interaction between the antizyme and ODC1. Interacts with GGN. Testis specific.

The protein localises to the nucleus. It is found in the cytoplasm. Its function is as follows. Ornithine decarboxylase (ODC) antizyme protein that negatively regulates ODC activity and intracellular polyamine biosynthesis and uptake in response to increased intracellular polyamine levels. Binds to ODC monomers, inhibiting the assembly of the functional ODC homodimers. Does not target the ODC monomers for degradation, which allows a protein synthesis-independent restoration of ODC activity. Stabilizes AZIN2 by interfering with its ubiquitination. Involved in the translocation of AZNI2 from ER-Golgi intermediate compartment (ERGIC) to the cytosol. Probably plays a key role in spermatogenesis by regulating the intracellular concentration of polyamines in haploid germ cells. In Homo sapiens (Human), this protein is Ornithine decarboxylase antizyme 3 (OAZ3).